A 457-amino-acid polypeptide reads, in one-letter code: Bifunctional protein GlmU (457 aa).

The segment at 1-230 (MSKRYAVVLA…FEESLGVNDR (230 aa)) is pyrophosphorylase. UDP-N-acetyl-alpha-D-glucosamine is bound by residues 9 to 12 (LAAG), Lys23, Gln73, and 78 to 79 (GT). Asp103 lines the Mg(2+) pocket. The UDP-N-acetyl-alpha-D-glucosamine site is built by Gly140, Glu155, Asn170, and Asn228. Asn228 contributes to the Mg(2+) binding site. The tract at residues 231–251 (IALAEASKLMQRRINDNHMRN) is linker. The segment at 252–457 (GVTLVNPENT…DYAKRLNHGK (206 aa)) is N-acetyltransferase. Positions 333 and 351 each coordinate UDP-N-acetyl-alpha-D-glucosamine. Residue His363 is the Proton acceptor of the active site. UDP-N-acetyl-alpha-D-glucosamine-binding residues include Tyr366 and Asn377. Residues 386 to 387 (NY), Ala423, and Arg440 contribute to the acetyl-CoA site.

The protein in the N-terminal section; belongs to the N-acetylglucosamine-1-phosphate uridyltransferase family. In the C-terminal section; belongs to the transferase hexapeptide repeat family. In terms of assembly, homotrimer. Mg(2+) serves as cofactor.

The protein localises to the cytoplasm. The enzyme catalyses alpha-D-glucosamine 1-phosphate + acetyl-CoA = N-acetyl-alpha-D-glucosamine 1-phosphate + CoA + H(+). It carries out the reaction N-acetyl-alpha-D-glucosamine 1-phosphate + UTP + H(+) = UDP-N-acetyl-alpha-D-glucosamine + diphosphate. Its pathway is nucleotide-sugar biosynthesis; UDP-N-acetyl-alpha-D-glucosamine biosynthesis; N-acetyl-alpha-D-glucosamine 1-phosphate from alpha-D-glucosamine 6-phosphate (route II): step 2/2. It functions in the pathway nucleotide-sugar biosynthesis; UDP-N-acetyl-alpha-D-glucosamine biosynthesis; UDP-N-acetyl-alpha-D-glucosamine from N-acetyl-alpha-D-glucosamine 1-phosphate: step 1/1. It participates in bacterial outer membrane biogenesis; LPS lipid A biosynthesis. Catalyzes the last two sequential reactions in the de novo biosynthetic pathway for UDP-N-acetylglucosamine (UDP-GlcNAc). The C-terminal domain catalyzes the transfer of acetyl group from acetyl coenzyme A to glucosamine-1-phosphate (GlcN-1-P) to produce N-acetylglucosamine-1-phosphate (GlcNAc-1-P), which is converted into UDP-GlcNAc by the transfer of uridine 5-monophosphate (from uridine 5-triphosphate), a reaction catalyzed by the N-terminal domain. The chain is Bifunctional protein GlmU from Listeria welshimeri serovar 6b (strain ATCC 35897 / DSM 20650 / CCUG 15529 / CIP 8149 / NCTC 11857 / SLCC 5334 / V8).